An 887-amino-acid polypeptide reads, in one-letter code: Transportin-2 (887 aa).

20 HEAT repeats span residues 9–36 (GLQQVLQLLKDSQSPNTATQRIVQDKLK), 41–79 (FPDFNNYLIFVLTRLKSEDEPTRSLSGLILKNNVKAHYQ), 88–121 (FIKQECLNNIGDASSLIRATIGILITTIASKGEL), 127–164 (LLPQLCNLLNSEDYNTCEGAFGALQKICEDSSELLDSD), 171–201 (NIMIPKFLQFFKHCSPKIRSHAIACVNQFIM), 214–241 (FIEHLFALAVDDDPEVRKNVCRALVMLL), 253–280 (HSIIQYMLQRTQDHDENVALEACEFWLT), 296–386 (VQLI…LANV), 394–422 (HLLPLLKGLLFHPEWVVKESGILVLGAIA), 434–461 (PELIPHLIQCLSDKKALVRSIACWTLSR), 475–508 (LKPLMTELLKRILDGNKRVQEAACSAFATLEEEA), 516–549 (LSYILDTLVFAFGKYQHKNLLILYDAIGTLADSV), 557–595 (EYIQKLMPPLIQKWNELKDEDKDLFPLLECLSSVATALQ), 603–654 (EPVY…GLGG), 665–696 (IMTLLFQCMQDSMPEVRQSSFALLGDLTKACF), 704–737 (AEFMPILGTNLNPEFISVCNNATWAIGEICMQMG), 745–780 (QMVLNNLVEIINRPNTPKTLLENTAITIGRLGYVCP), 788–821 (QQFIRPWCTSLRNIRDNEEKDSAFRGICMMIGVN), 830–861 (IFFCDAVASWVSPKDDLRDMFYKILHGFKDQV), and 864–884 (ENWQQFSEQFPPLLKERLAAF). Residues 31 to 99 (VQDKLKQLNQ…KQECLNNIGD (69 aa)) form the Importin N-terminal domain. A disordered region spans residues 344–363 (TLTHEAERPDSSEDAEDDDD). The residue at position 852 (Lys-852) is an N6-acetyllysine.

It belongs to the importin beta family. Importin beta-2 subfamily.

The protein resides in the cytoplasm. It localises to the nucleus. In terms of biological role, probably functions in nuclear protein import as nuclear transport receptor. Serves as receptor for nuclear localization signals (NLS) in cargo substrates. Is thought to mediate docking of the importin/substrate complex to the nuclear pore complex (NPC) through binding to nucleoporin and the complex is subsequently translocated through the pore by an energy requiring, Ran-dependent mechanism. At the nucleoplasmic side of the NPC, Ran binds to the importin, the importin/substrate complex dissociates and importin is re-exported from the nucleus to the cytoplasm where GTP hydrolysis releases Ran. The directionality of nuclear import is thought to be conferred by an asymmetric distribution of the GTP- and GDP-bound forms of Ran between the cytoplasm and nucleus. This Mus musculus (Mouse) protein is Transportin-2 (Tnpo2).